Reading from the N-terminus, the 100-residue chain is Large ribosomal subunit protein eL21 (100 aa).

The disordered stretch occupies residues 1-21 (MVKRTHGYRYKSRKLLRKKPR).

Belongs to the eukaryotic ribosomal protein eL21 family.

The polypeptide is Large ribosomal subunit protein eL21 (Pyrobaculum islandicum (strain DSM 4184 / JCM 9189 / GEO3)).